The primary structure comprises 346 residues: Glycerol-3-phosphate dehydrogenase [NAD(P)+] (346 aa).

Residues S15, W16, R36, and K110 each contribute to the NADPH site. Residues K110, G139, and S141 each contribute to the sn-glycerol 3-phosphate site. An NADPH-binding site is contributed by A143. Positions 194, 247, 257, 258, and 259 each coordinate sn-glycerol 3-phosphate. The active-site Proton acceptor is the K194. R258 provides a ligand contact to NADPH. NADPH contacts are provided by V282 and E284.

This sequence belongs to the NAD-dependent glycerol-3-phosphate dehydrogenase family.

Its subcellular location is the cytoplasm. The enzyme catalyses sn-glycerol 3-phosphate + NAD(+) = dihydroxyacetone phosphate + NADH + H(+). It catalyses the reaction sn-glycerol 3-phosphate + NADP(+) = dihydroxyacetone phosphate + NADPH + H(+). Its pathway is membrane lipid metabolism; glycerophospholipid metabolism. Functionally, catalyzes the reduction of the glycolytic intermediate dihydroxyacetone phosphate (DHAP) to sn-glycerol 3-phosphate (G3P), the key precursor for phospholipid synthesis. The polypeptide is Glycerol-3-phosphate dehydrogenase [NAD(P)+] (Xylella fastidiosa (strain M23)).